The primary structure comprises 901 residues: Protein translocase subunit SecA (901 aa).

ATP-binding positions include glutamine 89, 107–111 (GEGKT), and aspartate 502. The Zn(2+) site is built by cysteine 884, cysteine 886, cysteine 895, and histidine 896.

This sequence belongs to the SecA family. In terms of assembly, monomer and homodimer. Part of the essential Sec protein translocation apparatus which comprises SecA, SecYEG and auxiliary proteins SecDF-YajC and YidC. Zn(2+) serves as cofactor.

The protein localises to the cell inner membrane. The protein resides in the cytoplasm. It catalyses the reaction ATP + H2O + cellular proteinSide 1 = ADP + phosphate + cellular proteinSide 2.. Part of the Sec protein translocase complex. Interacts with the SecYEG preprotein conducting channel. Has a central role in coupling the hydrolysis of ATP to the transfer of proteins into and across the cell membrane, serving both as a receptor for the preprotein-SecB complex and as an ATP-driven molecular motor driving the stepwise translocation of polypeptide chains across the membrane. The protein is Protein translocase subunit SecA of Sinorhizobium fredii (strain NBRC 101917 / NGR234).